The following is a 345-amino-acid chain: Anthranilate phosphoribosyltransferase (345 aa).

5-phospho-alpha-D-ribose 1-diphosphate is bound by residues G75, G78–D79, S83, N85–T88, K103–S111, and G115. An anthranilate-binding site is contributed by G75. Residue S87 coordinates Mg(2+). N106 contributes to the anthranilate binding site. R161 contacts anthranilate. Mg(2+) is bound by residues D219 and E220.

The protein belongs to the anthranilate phosphoribosyltransferase family. As to quaternary structure, homodimer. It depends on Mg(2+) as a cofactor.

It catalyses the reaction N-(5-phospho-beta-D-ribosyl)anthranilate + diphosphate = 5-phospho-alpha-D-ribose 1-diphosphate + anthranilate. Its pathway is amino-acid biosynthesis; L-tryptophan biosynthesis; L-tryptophan from chorismate: step 2/5. Its function is as follows. Catalyzes the transfer of the phosphoribosyl group of 5-phosphorylribose-1-pyrophosphate (PRPP) to anthranilate to yield N-(5'-phosphoribosyl)-anthranilate (PRA). This chain is Anthranilate phosphoribosyltransferase, found in Nocardia farcinica (strain IFM 10152).